Consider the following 118-residue polypeptide: Large ribosomal subunit protein bL20 (118 aa).

This sequence belongs to the bacterial ribosomal protein bL20 family.

Binds directly to 23S ribosomal RNA and is necessary for the in vitro assembly process of the 50S ribosomal subunit. It is not involved in the protein synthesizing functions of that subunit. This chain is Large ribosomal subunit protein bL20, found in Psychrobacter sp. (strain PRwf-1).